We begin with the raw amino-acid sequence, 459 residues long: DNA primase large subunit (459 aa).

The [4Fe-4S] cluster site is built by Cys291, Cys369, Cys386, and Cys428.

This sequence belongs to the eukaryotic-type primase large subunit family. Heterodimer of a catalytic subunit spp1/pri1 and a regulatory subunit spp2/pri2, also known as the DNA primase complex. Component of the alpha DNA polymerase complex (also known as the alpha DNA polymerase-primase complex) consisting of four subunits: the catalytic subunit pol1, the accessory subunit spb70/pol12, and the primase complex subunits spp1/pri1 and spp2/pri2 respectively. Interacts with orc2; preferentially associates with the unphosphorylated orc2 in G1 pre-Start prior to orc2 being phosphorylated by cdc2, the interaction is mediated by spb70 and might enable the association of the whole alpha DNA polymerase complex to orc2/spb70 complex on chromatin. [4Fe-4S] cluster serves as cofactor.

It is found in the nucleus. The protein resides in the chromosome. Its function is as follows. Regulatory subunit of the DNA primase complex and component of the DNA polymerase alpha complex (also known as the alpha DNA polymerase-primase complex - primosome/replisome) which play an essential role in the initiation of DNA synthesis. During the S phase of the cell cycle, the DNA polymerase alpha complex (composed of a catalytic subunit pol1, an accessory subunit spb70/pol12 and two primase subunits, the catalytic subunit spp1/pri1 and the regulatory subunit spp2/pri2) is recruited to DNA at the replicative forks. The primase subunit of the polymerase alpha complex initiates DNA synthesis by oligomerising short RNA primers on both leading and lagging strands. This chain is DNA primase large subunit, found in Schizosaccharomyces pombe (strain 972 / ATCC 24843) (Fission yeast).